The following is a 482-amino-acid chain: tRNA sulfurtransferase (482 aa).

Residues 61–165 (LTIRDALTRI…DDRLLLIKGR (105 aa)) form the THUMP domain. ATP-binding positions include 183 to 184 (LI), Lys265, Gly287, and Gln296. Cys344 and Cys456 form a disulfide bridge. Positions 404-482 (CGPNDVILDI…GFNNVKVYRP (79 aa)) constitute a Rhodanese domain. The active-site Cysteine persulfide intermediate is Cys456.

Belongs to the ThiI family.

The protein localises to the cytoplasm. The catalysed reaction is [ThiI sulfur-carrier protein]-S-sulfanyl-L-cysteine + a uridine in tRNA + 2 reduced [2Fe-2S]-[ferredoxin] + ATP + H(+) = [ThiI sulfur-carrier protein]-L-cysteine + a 4-thiouridine in tRNA + 2 oxidized [2Fe-2S]-[ferredoxin] + AMP + diphosphate. It carries out the reaction [ThiS sulfur-carrier protein]-C-terminal Gly-Gly-AMP + S-sulfanyl-L-cysteinyl-[cysteine desulfurase] + AH2 = [ThiS sulfur-carrier protein]-C-terminal-Gly-aminoethanethioate + L-cysteinyl-[cysteine desulfurase] + A + AMP + 2 H(+). It participates in cofactor biosynthesis; thiamine diphosphate biosynthesis. Its function is as follows. Catalyzes the ATP-dependent transfer of a sulfur to tRNA to produce 4-thiouridine in position 8 of tRNAs, which functions as a near-UV photosensor. Also catalyzes the transfer of sulfur to the sulfur carrier protein ThiS, forming ThiS-thiocarboxylate. This is a step in the synthesis of thiazole, in the thiamine biosynthesis pathway. The sulfur is donated as persulfide by IscS. In Shigella dysenteriae serotype 1 (strain Sd197), this protein is tRNA sulfurtransferase.